The sequence spans 509 residues: Protein Jade-1 (509 aa).

Positions 1-45 (MKRGRLPSSSEDSDDNGSLSTTWSQNSRSQHRRSSCSRPEDRKPS) are disordered. The interval 60 to 80 (DSYQLNPDEYYVLADPWRQEW) is interaction with KAT7/HBO1 and histones. Positions 80–188 (WEKGVQVPVS…EQRCYDNMNH (109 aa)) are interaction with histones. S89 carries the phosphoserine modification. A Phosphothreonine modification is found at T92. K114 participates in a covalent cross-link: Glycyl lysine isopeptide (Lys-Gly) (interchain with G-Cter in SUMO2). The segment at 203-253 (YVVCDVCQSPDGEDGNEMVFCDKCNICVHQACYGILKVPEGSWLCRTCALG) adopts a PHD-type 1 zinc-finger fold. Residues 255–289 (QPKCLLCPKKGGAMKPTRSGTKWVHVSCALWIPEV) form a C2HC pre-PHD-type zinc finger. Residues 313–369 (LVCSLCNEKFGASIQCSVKNCRTAFHVTCAFDRGLEMKTILAENDEVKFKSYCPKHS) form a PHD-type 2 zinc finger. Residues 373–399 (KAEEGLGEGTAQENGAPECSPRDPLEP) are disordered.

The protein belongs to the JADE family. Component of the HBO1 complex composed at least of ING4 or ING5, KAT7/HBO1, MEAF6, and one of JADE1, JADE2 and JADE3. Interacts with NPHP4.

It is found in the nucleus. The protein localises to the chromosome. Its subcellular location is the cytoplasm. It localises to the cytoskeleton. The protein resides in the cilium basal body. Functionally, scaffold subunit of some HBO1 complexes, which have a histone H4 acetyltransferase activity. Plays a key role in HBO1 complex by directing KAT7/HBO1 specificity towards histone H4 acetylation (H4K5ac, H4K8ac and H4K12ac), regulating DNA replication initiation, regulating DNA replication initiation. May also promote acetylation of nucleosomal histone H4 by KAT5. Promotes apoptosis. May act as a renal tumor suppressor. Negatively regulates canonical Wnt signaling; at least in part, cooperates with NPHP4 in this function. The protein is Protein Jade-1 (JADE1) of Bos taurus (Bovine).